A 105-amino-acid chain; its full sequence is Small cysteine and glycine repeat-containing protein 10 (105 aa).

Residues 4–41 are 10 X 2 AA repeats of CG; sequence CGCGGCGGRCSGGCGGGCGGGCGGGCGGGCGGCGGGCG.

The protein belongs to the KRTAP type 28 family.

In the hair cortex, hair keratin intermediate filaments are embedded in an interfilamentous matrix, consisting of hair keratin-associated proteins (KRTAP), which are essential for the formation of a rigid and resistant hair shaft through their extensive disulfide bond cross-linking with abundant cysteine residues of hair keratins. The matrix proteins include the high-sulfur and high-glycine-tyrosine keratins. This Homo sapiens (Human) protein is Small cysteine and glycine repeat-containing protein 10.